Here is a 63-residue protein sequence, read N- to C-terminus: SERF-like protein C1705.02 (63 aa).

Residues 1-13 (MSRGNQRDVDRAR) are compositionally biased toward basic and acidic residues. A disordered region spans residues 1 to 63 (MSRGNQRDVD…EANGGSKGKK (63 aa)). Basic residues predominate over residues 14-24 (NLKKSQASKKK). Residues 25 to 35 (QAGDPTKRLEA) show a composition bias toward basic and acidic residues.

The protein belongs to the SERF family.

The protein resides in the cytoplasm. It is found in the nucleus. Its subcellular location is the nucleolus. The chain is SERF-like protein C1705.02 from Schizosaccharomyces pombe (strain 972 / ATCC 24843) (Fission yeast).